The following is a 453-amino-acid chain: tRNA modification GTPase MnmE (453 aa).

(6S)-5-formyl-5,6,7,8-tetrahydrofolate-binding residues include Arg-22, Glu-79, and Lys-119. In terms of domain architecture, TrmE-type G spans 215 to 376 (GMKVVIAGRP…LQQHLKSLMG (162 aa)). K(+) is bound at residue Asn-225. GTP contacts are provided by residues 225-230 (NAGKSS), 244-250 (TEIAGTT), 269-272 (DTAG), and 334-337 (NKAD). Ser-229 serves as a coordination point for Mg(2+). Residues Thr-244, Ile-246, and Thr-249 each coordinate K(+). Thr-250 contributes to the Mg(2+) binding site. Lys-453 is a binding site for (6S)-5-formyl-5,6,7,8-tetrahydrofolate.

This sequence belongs to the TRAFAC class TrmE-Era-EngA-EngB-Septin-like GTPase superfamily. TrmE GTPase family. As to quaternary structure, homodimer. Heterotetramer of two MnmE and two MnmG subunits. K(+) serves as cofactor.

It is found in the cytoplasm. In terms of biological role, exhibits a very high intrinsic GTPase hydrolysis rate. Involved in the addition of a carboxymethylaminomethyl (cmnm) group at the wobble position (U34) of certain tRNAs, forming tRNA-cmnm(5)s(2)U34. The chain is tRNA modification GTPase MnmE from Shewanella sediminis (strain HAW-EB3).